Reading from the N-terminus, the 206-residue chain is Superoxide dismutase [Mn] (206 aa).

Mn(2+) is bound by residues His27, His82, Asp168, and His172.

The protein belongs to the iron/manganese superoxide dismutase family. Requires Mn(2+) as cofactor.

The enzyme catalyses 2 superoxide + 2 H(+) = H2O2 + O2. Its function is as follows. Destroys superoxide anion radicals which are normally produced within the cells and which are toxic to biological systems. The polypeptide is Superoxide dismutase [Mn] (sodA) (Lactococcus lactis subsp. lactis (strain IL1403) (Streptococcus lactis)).